The following is an 89-amino-acid chain: Small ribosomal subunit protein uS15 (89 aa).

Belongs to the universal ribosomal protein uS15 family. In terms of assembly, part of the 30S ribosomal subunit. Forms a bridge to the 50S subunit in the 70S ribosome, contacting the 23S rRNA.

Its function is as follows. One of the primary rRNA binding proteins, it binds directly to 16S rRNA where it helps nucleate assembly of the platform of the 30S subunit by binding and bridging several RNA helices of the 16S rRNA. In terms of biological role, forms an intersubunit bridge (bridge B4) with the 23S rRNA of the 50S subunit in the ribosome. The chain is Small ribosomal subunit protein uS15 from Ruegeria sp. (strain TM1040) (Silicibacter sp.).